The chain runs to 232 residues: Large ribosomal subunit protein uL1 (232 aa).

The protein belongs to the universal ribosomal protein uL1 family. Part of the 50S ribosomal subunit.

Its function is as follows. Binds directly to 23S rRNA. The L1 stalk is quite mobile in the ribosome, and is involved in E site tRNA release. Functionally, protein L1 is also a translational repressor protein, it controls the translation of the L11 operon by binding to its mRNA. This chain is Large ribosomal subunit protein uL1, found in Xanthomonas oryzae pv. oryzae (strain KACC10331 / KXO85).